Reading from the N-terminus, the 261-residue chain is uncharacterized protein (261 aa).

3 residues coordinate NADP(+): I33, D78, and N105. Catalysis depends on S157, which acts as the Proton donor. The NADP(+) site is built by Y172, K176, and S206. Y172 (proton acceptor) is an active-site residue. The Lowers pKa of active site Tyr role is filled by K176.

Belongs to the short-chain dehydrogenases/reductases (SDR) family.

It localises to the cytoplasm. The protein resides in the nucleus. This is an uncharacterized protein from Schizosaccharomyces pombe (strain 972 / ATCC 24843) (Fission yeast).